Consider the following 892-residue polypeptide: von Willebrand factor A domain-containing protein 7 (892 aa).

Residues 1–27 (MLPVEVPLSQLGPPVLLLQLLLPPTSA) form the signal peptide. Residue Asn54 is glycosylated (N-linked (GlcNAc...) asparagine). The disordered stretch occupies residues 231-272 (YFGTNPPKPPGKCSHGGRFDQSSSQPPRGGINKDSTSPSFSP). The 183-residue stretch at 313-495 (ASSLSFVLDT…HIRDVAAVVG (183 aa)) folds into the VWFA domain.

The protein resides in the secreted. In Rattus norvegicus (Rat), this protein is von Willebrand factor A domain-containing protein 7 (Vwa7).